The chain runs to 407 residues: Acetate kinase (407 aa).

Position 10 (N10) interacts with Mg(2+). ATP is bound at residue K17. R93 contacts substrate. The Proton donor/acceptor role is filled by D150. ATP contacts are provided by residues 210-214, 284-286, and 332-336; these read HLGNG, DMR, and GVGEN. Position 386 (E386) interacts with Mg(2+).

This sequence belongs to the acetokinase family. Homodimer. It depends on Mg(2+) as a cofactor. The cofactor is Mn(2+).

Its subcellular location is the cytoplasm. It carries out the reaction acetate + ATP = acetyl phosphate + ADP. It participates in metabolic intermediate biosynthesis; acetyl-CoA biosynthesis; acetyl-CoA from acetate: step 1/2. Its function is as follows. Catalyzes the formation of acetyl phosphate from acetate and ATP. Can also catalyze the reverse reaction. This Streptomyces coelicolor (strain ATCC BAA-471 / A3(2) / M145) protein is Acetate kinase.